We begin with the raw amino-acid sequence, 111 residues long: V-type proton ATPase subunit G 2 (111 aa).

Belongs to the V-ATPase G subunit family. As to quaternary structure, V-ATPase is a heteromultimeric enzyme composed of a peripheral catalytic V1 complex (components A to H) attached to an integral membrane V0 proton pore complex (components: a, c, c', c'' and d).

In terms of biological role, catalytic subunit of the peripheral V1 complex of vacuolar ATPase (V-ATPase). V-ATPase is responsible for acidifying a variety of intracellular compartments in eukaryotic cells. This Nicotiana tabacum (Common tobacco) protein is V-type proton ATPase subunit G 2 (VATG2).